Here is a 367-residue protein sequence, read N- to C-terminus: S-adenosylmethionine:tRNA ribosyltransferase-isomerase (367 aa).

It belongs to the QueA family. In terms of assembly, monomer.

It is found in the cytoplasm. It carries out the reaction 7-aminomethyl-7-carbaguanosine(34) in tRNA + S-adenosyl-L-methionine = epoxyqueuosine(34) in tRNA + adenine + L-methionine + 2 H(+). The protein operates within tRNA modification; tRNA-queuosine biosynthesis. In terms of biological role, transfers and isomerizes the ribose moiety from AdoMet to the 7-aminomethyl group of 7-deazaguanine (preQ1-tRNA) to give epoxyqueuosine (oQ-tRNA). This is S-adenosylmethionine:tRNA ribosyltransferase-isomerase from Beijerinckia indica subsp. indica (strain ATCC 9039 / DSM 1715 / NCIMB 8712).